The following is a 294-amino-acid chain: UDP-N-acetylenolpyruvoylglucosamine reductase (294 aa).

The region spanning 26-189 (VGGQADVLFK…IEAEFKGVSS (164 aa)) is the FAD-binding PCMH-type domain. Arginine 169 is a catalytic residue. Cysteine 218 acts as the Proton donor in catalysis. Residue glutamate 288 is part of the active site.

Belongs to the MurB family. The cofactor is FAD.

It localises to the cytoplasm. It catalyses the reaction UDP-N-acetyl-alpha-D-muramate + NADP(+) = UDP-N-acetyl-3-O-(1-carboxyvinyl)-alpha-D-glucosamine + NADPH + H(+). Its pathway is cell wall biogenesis; peptidoglycan biosynthesis. In terms of biological role, cell wall formation. This chain is UDP-N-acetylenolpyruvoylglucosamine reductase, found in Wolbachia pipientis subsp. Culex pipiens (strain wPip).